A 214-amino-acid chain; its full sequence is High frequency lysogenization protein HflD homolog (214 aa).

This sequence belongs to the HflD family.

It localises to the cytoplasm. The protein localises to the cell inner membrane. This chain is High frequency lysogenization protein HflD homolog, found in Chromohalobacter salexigens (strain ATCC BAA-138 / DSM 3043 / CIP 106854 / NCIMB 13768 / 1H11).